We begin with the raw amino-acid sequence, 140 residues long: Methylglyoxal synthase (140 aa).

An MGS-like domain is found at 1 to 140 (MKIALIAHDR…HEGDRRPLAF (140 aa)). Substrate contacts are provided by residues histidine 8, lysine 12, 34 to 37 (TGTT), and 54 to 55 (SG). Aspartate 60 serves as the catalytic Proton donor/acceptor. Residue histidine 87 participates in substrate binding.

Belongs to the methylglyoxal synthase family.

The enzyme catalyses dihydroxyacetone phosphate = methylglyoxal + phosphate. Its function is as follows. Catalyzes the formation of methylglyoxal from dihydroxyacetone phosphate. In Enterococcus faecalis (strain ATCC 700802 / V583), this protein is Methylglyoxal synthase.